A 265-amino-acid polypeptide reads, in one-letter code: 4-hydroxy-tetrahydrodipicolinate reductase (265 aa).

NAD(+) contacts are provided by residues 7 to 12 and Asp-33; that span reads GASGRM. Arg-34 contacts NADP(+). NAD(+) contacts are provided by residues 96-98 and 120-123; these read GTT and AANM. His-153 (proton donor/acceptor) is an active-site residue. A (S)-2,3,4,5-tetrahydrodipicolinate-binding site is contributed by His-154. The active-site Proton donor is Lys-157. 163 to 164 is a binding site for (S)-2,3,4,5-tetrahydrodipicolinate; that stretch reads GT.

The protein belongs to the DapB family.

The protein resides in the cytoplasm. It carries out the reaction (S)-2,3,4,5-tetrahydrodipicolinate + NAD(+) + H2O = (2S,4S)-4-hydroxy-2,3,4,5-tetrahydrodipicolinate + NADH + H(+). The enzyme catalyses (S)-2,3,4,5-tetrahydrodipicolinate + NADP(+) + H2O = (2S,4S)-4-hydroxy-2,3,4,5-tetrahydrodipicolinate + NADPH + H(+). Its pathway is amino-acid biosynthesis; L-lysine biosynthesis via DAP pathway; (S)-tetrahydrodipicolinate from L-aspartate: step 4/4. In terms of biological role, catalyzes the conversion of 4-hydroxy-tetrahydrodipicolinate (HTPA) to tetrahydrodipicolinate. This is 4-hydroxy-tetrahydrodipicolinate reductase from Burkholderia lata (strain ATCC 17760 / DSM 23089 / LMG 22485 / NCIMB 9086 / R18194 / 383).